A 620-amino-acid chain; its full sequence is Glutathione-regulated potassium-efflux system protein KefC (620 aa).

12 consecutive transmembrane segments (helical) span residues 4-24 (HTLL…PIAV), 26-46 (LGLG…PWGL), 54-74 (SILH…GLEL), 90-110 (GALQ…FLGL), 114-134 (VAEL…MQAM), 149-169 (FAVL…IPLL), 178-198 (LGAF…VVLL), 218-238 (VFSA…EEVG), 270-290 (GLLL…GTLV), 294-314 (LRIL…LWLV), 327-347 (WFAV…GAAQ), and 359-379 (ALTL…VLLT). In terms of domain architecture, RCK N-terminal spans 399–518 (QPRVIVAGFG…AGVAMPERET (120 aa)). A disordered region spans residues 599–620 (QGTAEGKHSGEVADEPEVKPSI).

It belongs to the monovalent cation:proton antiporter 2 (CPA2) transporter (TC 2.A.37) family. KefC subfamily. As to quaternary structure, homodimer. Interacts with the regulatory subunit KefF.

Its subcellular location is the cell inner membrane. Pore-forming subunit of a potassium efflux system that confers protection against electrophiles. Catalyzes K(+)/H(+) antiport. The sequence is that of Glutathione-regulated potassium-efflux system protein KefC from Salmonella agona (strain SL483).